Reading from the N-terminus, the 47-residue chain is Potassium channel toxin gamma-KTx 5.2 (47 aa).

Intrachain disulfides connect C5-C23, C11-C34, C20-C39, and C24-C41.

Belongs to the ergtoxin family. Gamma-KTx 5 subfamily. As to expression, expressed by the venom gland.

It localises to the secreted. Its function is as follows. Reversibly blocks Kv11/ERG potassium channels. This Centruroides gracilis (Slenderbrown scorpion) protein is Potassium channel toxin gamma-KTx 5.2.